We begin with the raw amino-acid sequence, 194 residues long: Phosphoheptose isomerase (194 aa).

The 158-residue stretch at 37–194 (ISNSFKQGGK…LIEFEMAKQA (158 aa)) folds into the SIS domain. 52-54 (NGG) is a substrate binding site. The Zn(2+) site is built by His-61 and Glu-65. Substrate contacts are provided by residues Glu-65, 93–94 (ND), 119–121 (STS), Ser-124, and Gln-172. Residues Gln-172 and His-180 each contribute to the Zn(2+) site.

The protein belongs to the SIS family. GmhA subfamily. As to quaternary structure, homotetramer. Requires Zn(2+) as cofactor.

It localises to the cytoplasm. The enzyme catalyses 2 D-sedoheptulose 7-phosphate = D-glycero-alpha-D-manno-heptose 7-phosphate + D-glycero-beta-D-manno-heptose 7-phosphate. Its pathway is carbohydrate biosynthesis; D-glycero-D-manno-heptose 7-phosphate biosynthesis; D-glycero-alpha-D-manno-heptose 7-phosphate and D-glycero-beta-D-manno-heptose 7-phosphate from sedoheptulose 7-phosphate: step 1/1. Functionally, catalyzes the isomerization of sedoheptulose 7-phosphate in D-glycero-D-manno-heptose 7-phosphate. This chain is Phosphoheptose isomerase, found in Haemophilus influenzae (strain 86-028NP).